A 412-amino-acid polypeptide reads, in one-letter code: DNA utilization protein HofQ (412 aa).

The N-terminal stretch at 1–18 (MKQWIAALLLMLIPGVQA) is a signal peptide.

Belongs to the bacterial secretin family. PilQ subfamily.

It localises to the cell outer membrane. In terms of biological role, required for the use of extracellular DNA as a nutrient. Could be the porin responsible for transport of DNA across the outer membrane. In Escherichia coli (strain K12), this protein is DNA utilization protein HofQ (hofQ).